The chain runs to 200 residues: Probable fatty acid desaturase MIMI_L630 (200 aa).

2 consecutive transmembrane segments (helical) span residues 9–29 (FIQI…YHWI) and 79–99 (IGPL…FIMI).

It belongs to the fatty acid desaturase CarF family.

It localises to the membrane. The chain is Probable fatty acid desaturase MIMI_L630 from Acanthamoeba polyphaga mimivirus (APMV).